Here is a 356-residue protein sequence, read N- to C-terminus: 5-formaminoimidazole-4-carboxamide-1-(beta)-D-ribofuranosyl 5'-monophosphate synthetase 1 (356 aa).

5-amino-1-(5-phospho-beta-D-ribosyl)imidazole-4-carboxamide contacts are provided by His-27 and Ser-94. Positions 101 to 333 (TENFAEMAVP…YADLIQEDLS (233 aa)) constitute an ATP-grasp domain. ATP is bound by residues 145–196 (PRDI…TRYY) and Glu-226. Asn-255 is a 5-amino-1-(5-phospho-beta-D-ribosyl)imidazole-4-carboxamide binding site. Mg(2+)-binding residues include Glu-293 and Glu-306.

It belongs to the phosphohexose mutase family. Mg(2+) is required as a cofactor. Requires Mn(2+) as cofactor.

It catalyses the reaction 5-amino-1-(5-phospho-beta-D-ribosyl)imidazole-4-carboxamide + formate + ATP = 5-formamido-1-(5-phospho-D-ribosyl)imidazole-4-carboxamide + ADP + phosphate. Its pathway is purine metabolism; IMP biosynthesis via de novo pathway; 5-formamido-1-(5-phospho-D-ribosyl)imidazole-4-carboxamide from 5-amino-1-(5-phospho-D-ribosyl)imidazole-4-carboxamide (formate route): step 1/1. In terms of biological role, catalyzes the ATP- and formate-dependent formylation of 5-aminoimidazole-4-carboxamide-1-beta-d-ribofuranosyl 5'-monophosphate (AICAR) to 5-formaminoimidazole-4-carboxamide-1-beta-d-ribofuranosyl 5'-monophosphate (FAICAR) in the absence of folates. In Methanosarcina mazei (strain ATCC BAA-159 / DSM 3647 / Goe1 / Go1 / JCM 11833 / OCM 88) (Methanosarcina frisia), this protein is 5-formaminoimidazole-4-carboxamide-1-(beta)-D-ribofuranosyl 5'-monophosphate synthetase 1.